Reading from the N-terminus, the 208-residue chain is Large ribosomal subunit protein uL4 (208 aa).

A disordered region spans residues 46–97 (QGTHKTKTRAEVRGGGKKPYRQKGTGNARQGSSRSPIMVGGGTIFGPQPRSY). Polar residues predominate over residues 69–80 (GTGNARQGSSRS).

This sequence belongs to the universal ribosomal protein uL4 family. Part of the 50S ribosomal subunit.

Its function is as follows. One of the primary rRNA binding proteins, this protein initially binds near the 5'-end of the 23S rRNA. It is important during the early stages of 50S assembly. It makes multiple contacts with different domains of the 23S rRNA in the assembled 50S subunit and ribosome. Functionally, forms part of the polypeptide exit tunnel. In Chlorobaculum parvum (strain DSM 263 / NCIMB 8327) (Chlorobium vibrioforme subsp. thiosulfatophilum), this protein is Large ribosomal subunit protein uL4.